Here is a 62-residue protein sequence, read N- to C-terminus: Statherin (62 aa).

The signal sequence occupies residues 1 to 19 (MKFLVFAFILALMVSMIGA). A hydroxyapatite-binding; inhibits crystal growth region spans residues 20 to 25 (DSSEEK). Residues Ser-21 and Ser-22 each carry the phosphoserine modification. Positions 25–56 (KFLRRIGRFGYGYGPYQPVPEQPLYPQPYQPQ) form a cross-link, isoglutamyl lysine isopeptide (Lys-Gln); in form cyclo-statherin Q-37. The segment at residues 25–58 (KFLRRIGRFGYGYGPYQPVPEQPLYPQPYQPQYQ) is a cross-link (isoglutamyl lysine isopeptide (Lys-Gln); in form cyclo-statherin Q-39). Residues 38–62 (GPYQPVPEQPLYPQPYQPQYQQYTF) form a hydrophobic; inhibits precipitation of calcium phosphate salts region.

It belongs to the histatin/statherin family. In terms of processing, substrate for transglutaminase-2. More than 95% of the cyclized peptide is cyclo-statherin Q-37, and less than 5% is cyclo-statherin Q-39. Cyclized forms account for about 1% of total statherin in saliva. Post-translationally, sulfated on tyrosine residues. Secreted by parotid and submandibular glands.

It localises to the secreted. Salivary protein that stabilizes saliva supersaturated with calcium salts by inhibiting the precipitation of calcium phosphate salts. It also modulates hydroxyapatite crystal formation on the tooth surface. The chain is Statherin (STATH) from Homo sapiens (Human).